A 297-amino-acid chain; its full sequence is Succinate dehydrogenase [ubiquinone] iron-sulfur subunit, mitochondrial (297 aa).

Positions 33 to 55 (TAEALSASRPPIKETKTSTVKEP) are disordered. One can recognise a 2Fe-2S ferredoxin-type domain in the interval 78-157 (DKPRMQSYTL…ETRIYPLPHT (80 aa)). 4 residues coordinate [2Fe-2S] cluster: cysteine 117, cysteine 122, cysteine 125, and cysteine 137. The 31-residue stretch at 199–229 (DRKKLDGLYECILCACCSTSCPSYWWNSEEY) folds into the 4Fe-4S ferredoxin-type domain. Residues cysteine 209, cysteine 212, and cysteine 215 each contribute to the [4Fe-4S] cluster site. Cysteine 219 is a binding site for [3Fe-4S] cluster. Tryptophan 224 lines the a ubiquinone pocket. Residues cysteine 266 and cysteine 272 each contribute to the [3Fe-4S] cluster site. Cysteine 276 contributes to the [4Fe-4S] cluster binding site.

The protein belongs to the succinate dehydrogenase/fumarate reductase iron-sulfur protein family. Component of complex II composed of four subunits: a flavoprotein (FP), an iron-sulfur protein (IP), and a cytochrome b composed of a large and a small subunit. Requires [2Fe-2S] cluster as cofactor. It depends on [3Fe-4S] cluster as a cofactor. [4Fe-4S] cluster serves as cofactor.

Its subcellular location is the mitochondrion inner membrane. The enzyme catalyses a quinone + succinate = fumarate + a quinol. The protein operates within carbohydrate metabolism; tricarboxylic acid cycle; fumarate from succinate (eukaryal route): step 1/1. In terms of biological role, iron-sulfur protein (IP) subunit of succinate dehydrogenase (SDH) that is involved in complex II of the mitochondrial electron transport chain and is responsible for transferring electrons from succinate to ubiquinone (coenzyme Q). The sequence is that of Succinate dehydrogenase [ubiquinone] iron-sulfur subunit, mitochondrial (SDH2) from Zymoseptoria tritici (Speckled leaf blotch fungus).